The primary structure comprises 104 residues: Zinc-containing ferredoxin-1 (104 aa).

An N-terminal extension region spans residues 2 to 37 (GIDPNYRTNRQVVGEHSGHKVYGPVEPPKVLGIHGT). The Zn(2+) site is built by His-17 and His-20. The residue at position 30 (Lys-30) is an N6-methyllysine. His-35 contributes to the Zn(2+) binding site. 4Fe-4S ferredoxin-type domains lie at 38 to 66 (IVGVDFDLCIADGSCINACPVNVFQWYDT) and 75 to 104 (KADPVNEQACIFCMACVNVCPVAAIDVKPP). [3Fe-4S] cluster is bound by residues Cys-46 and Cys-52. Cys-56 is a binding site for [4Fe-4S] cluster. Residue Asp-77 coordinates Zn(2+). Positions 84, 87, and 90 each coordinate [4Fe-4S] cluster. Cys-94 serves as a coordination point for [3Fe-4S] cluster.

Requires [3Fe-4S] cluster as cofactor. It depends on [4Fe-4S] cluster as a cofactor. The cofactor is Zn(2+).

Functionally, ferredoxins are iron-sulfur proteins that transfer electrons in a wide variety of metabolic reactions. The polypeptide is Zinc-containing ferredoxin-1 (zfx1) (Sulfurisphaera tokodaii (strain DSM 16993 / JCM 10545 / NBRC 100140 / 7) (Sulfolobus tokodaii)).